Here is a 298-residue protein sequence, read N- to C-terminus: Leucine-rich repeat-containing protein 38 (298 aa).

The N-terminal stretch at 1–31 is a signal peptide; sequence MSLCVAPRHPTGAAAALGLGSLLVLLGPGRA. 2 disulfides stabilise this stretch: Cys32-Cys38 and Cys36-Cys46. Residues 32–60 form the LRRNT domain; the sequence is CPAGCACTDPHTVDCRDRGLPSVPDPFPL. Residues 32 to 251 are Extracellular-facing; the sequence is CPAGCACTDP…ECKFSLSLTD (220 aa). LRR repeat units lie at residues 61–82, 85–106, 109–130, 133–154, and 157–177; these read DVRKLLVAGNRIQQIPEDFFIF, DLVYLDFRNNSLRSLEEGTFSG, KLAFLDLSYNNLTQLGAGAFRS, RLVKLSLANNHLAGVHEAAFES, and SLQVLELNDNNLRSLNVAALD. Residue Asn119 is glycosylated (N-linked (GlcNAc...) asparagine). The 56-residue stretch at 190-245 folds into the LRRCT domain; sequence NPWLCDCDFAHLFSWIQENTSKLPKGLDAIQCSLPMEDRRVALRELSEASFSECKF. Disulfide bonds link Cys194/Cys221 and Cys196/Cys243. The chain crosses the membrane as a helical span at residues 252-272; sequence LFIIIFSGVAVSIAAIISSFF. Over 273–298 the chain is Cytoplasmic; that stretch reads LATVVQCFQRCAPNKDTEDEDDDEDD.

Interacts with KCNMA1.

Its subcellular location is the cell membrane. In terms of biological role, auxiliary protein of the large-conductance, voltage and calcium-activated potassium channel (BK alpha). Modulates gating properties by producing a marked shift in the BK channel's voltage dependence of activation in the hyperpolarizing direction, and in the absence of calcium. This Mus musculus (Mouse) protein is Leucine-rich repeat-containing protein 38 (Lrrc38).